Consider the following 275-residue polypeptide: Elongation factor Ts (275 aa).

Positions 76-79 are involved in Mg(2+) ion dislocation from EF-Tu; sequence TDFV.

Belongs to the EF-Ts family.

It localises to the cytoplasm. Associates with the EF-Tu.GDP complex and induces the exchange of GDP to GTP. It remains bound to the aminoacyl-tRNA.EF-Tu.GTP complex up to the GTP hydrolysis stage on the ribosome. The protein is Elongation factor Ts of Rhodococcus opacus (strain B4).